The sequence spans 140 residues: Calcitonin (140 aa).

The signal sequence occupies residues 1 to 25; sequence MGFWKFSPFLPLSILVLYQVGIIQA. Positions 26-81 are excised as a propeptide; the sequence is APFRSALESLPDPAVLPEEESRLLLAALVKDYVQMKVRALEQEQETGGASLDSPRA. A disulfide bridge links Cys-84 with Cys-90. Position 115 is a proline amide (Pro-115). Residues 120 to 140 constitute a propeptide that is removed on maturation; that stretch reads VMARGLERDHGPHIGTSQDAY.

Belongs to the calcitonin family.

Its subcellular location is the secreted. Its function is as follows. Calcitonin is a peptide hormone that causes a rapid but short-lived drop in the level of calcium and phosphate in blood by promoting the incorporation of those ions in the bones. Calcitonin function is mediated by the calcitonin receptor/CALCR and the CALCR-RAMP2 (AMYR2) receptor complex. This is Calcitonin (CALCA) from Equus caballus (Horse).